Consider the following 260-residue polypeptide: 3'-5' ssDNA/RNA exonuclease TatD (260 aa).

A divalent metal cation contacts are provided by Glu91, His127, and His152.

It belongs to the metallo-dependent hydrolases superfamily. TatD-type hydrolase family. TatD subfamily. In terms of assembly, monomer. Mg(2+) serves as cofactor.

It localises to the cytoplasm. Its function is as follows. 3'-5' exonuclease that prefers single-stranded DNA and RNA. May play a role in the H(2)O(2)-induced DNA damage repair. In Escherichia fergusonii (strain ATCC 35469 / DSM 13698 / CCUG 18766 / IAM 14443 / JCM 21226 / LMG 7866 / NBRC 102419 / NCTC 12128 / CDC 0568-73), this protein is 3'-5' ssDNA/RNA exonuclease TatD.